Reading from the N-terminus, the 200-residue chain is 3-isopropylmalate dehydratase small subunit (200 aa).

Belongs to the LeuD family. LeuD type 1 subfamily. As to quaternary structure, heterodimer of LeuC and LeuD.

It carries out the reaction (2R,3S)-3-isopropylmalate = (2S)-2-isopropylmalate. Its pathway is amino-acid biosynthesis; L-leucine biosynthesis; L-leucine from 3-methyl-2-oxobutanoate: step 2/4. Functionally, catalyzes the isomerization between 2-isopropylmalate and 3-isopropylmalate, via the formation of 2-isopropylmaleate. The protein is 3-isopropylmalate dehydratase small subunit of Sodalis glossinidius (strain morsitans).